We begin with the raw amino-acid sequence, 170 residues long: S-ribosylhomocysteine lyase (170 aa).

Fe cation contacts are provided by His-54, His-58, and Cys-128.

Belongs to the LuxS family. As to quaternary structure, homodimer. Requires Fe cation as cofactor.

The enzyme catalyses S-(5-deoxy-D-ribos-5-yl)-L-homocysteine = (S)-4,5-dihydroxypentane-2,3-dione + L-homocysteine. In terms of biological role, involved in the synthesis of autoinducer 2 (AI-2) which is secreted by bacteria and is used to communicate both the cell density and the metabolic potential of the environment. The regulation of gene expression in response to changes in cell density is called quorum sensing. Catalyzes the transformation of S-ribosylhomocysteine (RHC) to homocysteine (HC) and 4,5-dihydroxy-2,3-pentadione (DPD). This chain is S-ribosylhomocysteine lyase, found in Marinomonas sp. (strain MWYL1).